The sequence spans 547 residues: Probable bifunctional tRNA threonylcarbamoyladenosine biosynthesis protein (547 aa).

The kae1 stretch occupies residues 1-329; that stretch reads MKNTFILGIE…FRTDDVNVTW (329 aa). Residues His113, His117, and Tyr134 each contribute to the Fe cation site. L-threonylcarbamoyladenylate is bound by residues 134 to 138, Asp166, Gly179, Glu183, and Asn262; that span reads YVSGA. Asp290 serves as a coordination point for Fe cation. The Protein kinase domain maps to 340 to 547; that stretch reads EISPEAFLRA…EEIKKRARYA (208 aa). ATP-binding positions include 355–363 and Lys377; that span reads LDNGAEAVI. The active-site Proton acceptor; for kinase activity is the Asp464.

In the N-terminal section; belongs to the KAE1 / TsaD family. It in the C-terminal section; belongs to the protein kinase superfamily. Tyr protein kinase family. BUD32 subfamily. Component of the KEOPS complex that consists of Kae1, Bud32, Cgi121 and Pcc1; the whole complex dimerizes. Fe(2+) is required as a cofactor.

The protein localises to the cytoplasm. It carries out the reaction L-seryl-[protein] + ATP = O-phospho-L-seryl-[protein] + ADP + H(+). It catalyses the reaction L-threonyl-[protein] + ATP = O-phospho-L-threonyl-[protein] + ADP + H(+). The catalysed reaction is L-threonylcarbamoyladenylate + adenosine(37) in tRNA = N(6)-L-threonylcarbamoyladenosine(37) in tRNA + AMP + H(+). In terms of biological role, required for the formation of a threonylcarbamoyl group on adenosine at position 37 (t(6)A37) in tRNAs that read codons beginning with adenine. Is a component of the KEOPS complex that is probably involved in the transfer of the threonylcarbamoyl moiety of threonylcarbamoyl-AMP (TC-AMP) to the N6 group of A37. The Kae1 domain likely plays a direct catalytic role in this reaction. The Bud32 domain probably displays kinase activity that regulates Kae1 function. The sequence is that of Probable bifunctional tRNA threonylcarbamoyladenosine biosynthesis protein from Methanosarcina acetivorans (strain ATCC 35395 / DSM 2834 / JCM 12185 / C2A).